A 163-amino-acid polypeptide reads, in one-letter code: tRNA-acetylating toxin 2 (163 aa).

9 residues coordinate acetyl-CoA: L89, V91, H96, G97, Q98, G99, A101, R102, and E132. Y137 is an active-site residue. R139 is a binding site for acetyl-CoA.

It belongs to the acetyltransferase family. GNAT subfamily. As to quaternary structure, homodimer (in absence of antitoxin). Forms a complex with cognate antitoxin TacA2. Forms a 4:2 antitoxin:toxin complex with cognate antitoxin TacA2.

It catalyses the reaction glycyl-tRNA(Gly) + acetyl-CoA = N-acetylglycyl-tRNA(Gly) + CoA + H(+). Toxic component of a type II toxin-antitoxin (TA) system. Acetylates tRNA and inhibits translation. Acetylates exclusively Gly in situ. Overexpression during the lag phase of a tacA2-tacT2 deletion strain leads to very small increase in persister cells in the presence of cefotaxime but no detectable growth phenotype in absence of antibiotics. Compared to a protein with a single amino acid change (TacT2 from S.enterica NCTC 13349, Glu-29 is Lys in NCTC 13349) this protein binds tRNA very poorly and acetylates tRNA very poorly. Persister cell formation is neutralized by cognate antitoxin TacA2. Neutralized only by cognate antitoxin TacA2 (A8), but not by TacA1 or TacA3. Plays a role in persister cell formation. Functionally, the TacA2-TacT2 complex both represses and derepresses expression of its own operon. The protein is tRNA-acetylating toxin 2 of Salmonella typhimurium (strain 14028s / SGSC 2262).